The primary structure comprises 321 residues: Lambda-crystallin homolog (321 aa).

Serine 6 is modified (phosphoserine). Residues 19–20, aspartate 39, glutamate 100, and lysine 105 contribute to the NAD(+) site; that span reads LI.

The protein belongs to the 3-hydroxyacyl-CoA dehydrogenase family. In terms of assembly, homodimer.

The protein localises to the cytoplasm. It carries out the reaction L-gulonate + NAD(+) = 3-dehydro-L-gulonate + NADH + H(+). With respect to regulation, inhibited by malonate. Functionally, has high L-gulonate 3-dehydrogenase activity. It also exhibits low dehydrogenase activity toward L-3-hydroxybutyrate (HBA) and L-threonate. This Bos taurus (Bovine) protein is Lambda-crystallin homolog (CRYL1).